Consider the following 130-residue polypeptide: Large ribosomal subunit protein bL12 (130 aa).

Belongs to the bacterial ribosomal protein bL12 family. In terms of assembly, homodimer. Part of the ribosomal stalk of the 50S ribosomal subunit. Forms a multimeric L10(L12)X complex, where L10 forms an elongated spine to which 2 to 4 L12 dimers bind in a sequential fashion. Binds GTP-bound translation factors.

Its function is as follows. Forms part of the ribosomal stalk which helps the ribosome interact with GTP-bound translation factors. Is thus essential for accurate translation. The sequence is that of Large ribosomal subunit protein bL12 from Thermobifida fusca (strain YX).